A 121-amino-acid polypeptide reads, in one-letter code: Phosphoribosyl-ATP pyrophosphatase (121 aa).

The protein belongs to the PRA-PH family.

It is found in the cytoplasm. The catalysed reaction is 1-(5-phospho-beta-D-ribosyl)-ATP + H2O = 1-(5-phospho-beta-D-ribosyl)-5'-AMP + diphosphate + H(+). The protein operates within amino-acid biosynthesis; L-histidine biosynthesis; L-histidine from 5-phospho-alpha-D-ribose 1-diphosphate: step 2/9. The sequence is that of Phosphoribosyl-ATP pyrophosphatase from Burkholderia cenocepacia (strain ATCC BAA-245 / DSM 16553 / LMG 16656 / NCTC 13227 / J2315 / CF5610) (Burkholderia cepacia (strain J2315)).